The sequence spans 599 residues: Retrotransposon Gag-like protein 5 (599 aa).

3 disordered regions span residues 77 to 97 (DPTPEEEEEEEEEVPFLCWPP), 116 to 139 (DYTNPDGSSDPPLSPSPSQPELHS), and 377 to 450 (FPQE…EEDE). The segment covering 78-90 (PTPEEEEEEEEEV) has biased composition (acidic residues). Acidic residues-rich tracts occupy residues 393 to 432 (DEMEDEEDEDEDEDYEFEEEDEDDDDEEEEEEEEEEEDKE) and 439 to 450 (DSDENKYEEEDE).

The protein is Retrotransposon Gag-like protein 5 of Mus musculus (Mouse).